A 210-amino-acid polypeptide reads, in one-letter code: High-affinity nitrate transporter 3.1 (210 aa).

Positions 1-22 are cleaved as a signal peptide; sequence MAIQKILFASLLICSLIQSIHG. Residues 178–198 traverse the membrane as a helical segment; the sequence is LDIASICFSVFSVVALVVFFV.

This sequence belongs to the NAR2 family. Heterotetramer composed of two NRT2.1 and two NRT3.1. Interacts with NRT2.1 and NRT2.3. Interacts with all other NRT2 transporters, including NRT2.5. Highly expressed in roots. Detected in shoots.

The protein localises to the cell membrane. In terms of biological role, acts as a dual component transporter with NTR2.1. Required for high-affinity nitrate transport. Acts as a repressor of lateral root initiation. May be involved in targeting NRT2 proteins to the plasma membrane. The protein is High-affinity nitrate transporter 3.1 (NRT3.1) of Arabidopsis thaliana (Mouse-ear cress).